Consider the following 110-residue polypeptide: UPF0060 membrane protein Psyc_0916 (110 aa).

4 helical membrane-spanning segments follow: residues 7–27, 33–53, 63–83, and 87–107; these read VGLF…PYLW, SIWL…LLSL, AAYG…VNGI, and TWDI…MFAP.

Belongs to the UPF0060 family.

It is found in the cell inner membrane. The polypeptide is UPF0060 membrane protein Psyc_0916 (Psychrobacter arcticus (strain DSM 17307 / VKM B-2377 / 273-4)).